The chain runs to 311 residues: 4-hydroxy-3-methylbut-2-enyl diphosphate reductase (311 aa).

Cysteine 12 contributes to the [4Fe-4S] cluster binding site. 2 residues coordinate (2E)-4-hydroxy-3-methylbut-2-enyl diphosphate: histidine 41 and histidine 74. Dimethylallyl diphosphate-binding residues include histidine 41 and histidine 74. 2 residues coordinate isopentenyl diphosphate: histidine 41 and histidine 74. Cysteine 96 is a [4Fe-4S] cluster binding site. Histidine 124 provides a ligand contact to (2E)-4-hydroxy-3-methylbut-2-enyl diphosphate. Histidine 124 lines the dimethylallyl diphosphate pocket. Histidine 124 contributes to the isopentenyl diphosphate binding site. Catalysis depends on glutamate 126, which acts as the Proton donor. Threonine 167 provides a ligand contact to (2E)-4-hydroxy-3-methylbut-2-enyl diphosphate. Cysteine 197 lines the [4Fe-4S] cluster pocket. (2E)-4-hydroxy-3-methylbut-2-enyl diphosphate contacts are provided by serine 225, serine 226, asparagine 227, and serine 269. Dimethylallyl diphosphate-binding residues include serine 225, serine 226, asparagine 227, and serine 269. Serine 225, serine 226, asparagine 227, and serine 269 together coordinate isopentenyl diphosphate.

Belongs to the IspH family. It depends on [4Fe-4S] cluster as a cofactor.

It catalyses the reaction isopentenyl diphosphate + 2 oxidized [2Fe-2S]-[ferredoxin] + H2O = (2E)-4-hydroxy-3-methylbut-2-enyl diphosphate + 2 reduced [2Fe-2S]-[ferredoxin] + 2 H(+). The enzyme catalyses dimethylallyl diphosphate + 2 oxidized [2Fe-2S]-[ferredoxin] + H2O = (2E)-4-hydroxy-3-methylbut-2-enyl diphosphate + 2 reduced [2Fe-2S]-[ferredoxin] + 2 H(+). It functions in the pathway isoprenoid biosynthesis; dimethylallyl diphosphate biosynthesis; dimethylallyl diphosphate from (2E)-4-hydroxy-3-methylbutenyl diphosphate: step 1/1. The protein operates within isoprenoid biosynthesis; isopentenyl diphosphate biosynthesis via DXP pathway; isopentenyl diphosphate from 1-deoxy-D-xylulose 5-phosphate: step 6/6. In terms of biological role, catalyzes the conversion of 1-hydroxy-2-methyl-2-(E)-butenyl 4-diphosphate (HMBPP) into a mixture of isopentenyl diphosphate (IPP) and dimethylallyl diphosphate (DMAPP). Acts in the terminal step of the DOXP/MEP pathway for isoprenoid precursor biosynthesis. The protein is 4-hydroxy-3-methylbut-2-enyl diphosphate reductase of Aeromonas salmonicida (strain A449).